The following is a 304-amino-acid chain: Energy-coupling factor transporter ATP-binding protein EcfA2 (304 aa).

Residues 11–260 (LKADEILAVS…QTFLEKTTIV (250 aa)) form the ABC transporter domain. ATP is bound at residue 54-61 (GDSGSGKS).

Belongs to the ABC transporter superfamily. Energy-coupling factor EcfA family. As to quaternary structure, forms a stable energy-coupling factor (ECF) transporter complex composed of 2 membrane-embedded substrate-binding proteins (S component), 2 ATP-binding proteins (A component) and 2 transmembrane proteins (T component).

The protein resides in the cell membrane. ATP-binding (A) component of a common energy-coupling factor (ECF) ABC-transporter complex. Unlike classic ABC transporters this ECF transporter provides the energy necessary to transport a number of different substrates. The chain is Energy-coupling factor transporter ATP-binding protein EcfA2 from Mycoplasma genitalium (strain ATCC 33530 / DSM 19775 / NCTC 10195 / G37) (Mycoplasmoides genitalium).